The primary structure comprises 302 residues: UDP-N-acetylenolpyruvoylglucosamine reductase (302 aa).

Residues 31–210 enclose the FAD-binding PCMH-type domain; it reads IGGQTKVYFR…ENEVLELKKK (180 aa). Arginine 175 is an active-site residue. Serine 224 (proton donor) is an active-site residue. Glutamate 297 is a catalytic residue.

This sequence belongs to the MurB family. It depends on FAD as a cofactor.

It localises to the cytoplasm. It carries out the reaction UDP-N-acetyl-alpha-D-muramate + NADP(+) = UDP-N-acetyl-3-O-(1-carboxyvinyl)-alpha-D-glucosamine + NADPH + H(+). It functions in the pathway cell wall biogenesis; peptidoglycan biosynthesis. Functionally, cell wall formation. The protein is UDP-N-acetylenolpyruvoylglucosamine reductase of Pelagibacter ubique (strain HTCC1062).